A 336-amino-acid polypeptide reads, in one-letter code: tRNA(Ile)-lysidine synthase (336 aa).

21–26 (SGGLDS) contacts ATP.

This sequence belongs to the tRNA(Ile)-lysidine synthase family.

The protein resides in the cytoplasm. It catalyses the reaction cytidine(34) in tRNA(Ile2) + L-lysine + ATP = lysidine(34) in tRNA(Ile2) + AMP + diphosphate + H(+). Ligates lysine onto the cytidine present at position 34 of the AUA codon-specific tRNA(Ile) that contains the anticodon CAU, in an ATP-dependent manner. Cytidine is converted to lysidine, thus changing the amino acid specificity of the tRNA from methionine to isoleucine. This chain is tRNA(Ile)-lysidine synthase, found in Helicobacter pylori (strain ATCC 700392 / 26695) (Campylobacter pylori).